The sequence spans 232 residues: Ubiquinone biosynthesis O-methyltransferase (232 aa).

Residues Arg-36, Gly-55, Asp-76, and Met-120 each coordinate S-adenosyl-L-methionine.

It belongs to the methyltransferase superfamily. UbiG/COQ3 family.

It carries out the reaction a 3-demethylubiquinol + S-adenosyl-L-methionine = a ubiquinol + S-adenosyl-L-homocysteine + H(+). The catalysed reaction is a 3-(all-trans-polyprenyl)benzene-1,2-diol + S-adenosyl-L-methionine = a 2-methoxy-6-(all-trans-polyprenyl)phenol + S-adenosyl-L-homocysteine + H(+). It functions in the pathway cofactor biosynthesis; ubiquinone biosynthesis. In terms of biological role, O-methyltransferase that catalyzes the 2 O-methylation steps in the ubiquinone biosynthetic pathway. The protein is Ubiquinone biosynthesis O-methyltransferase of Paraburkholderia phymatum (strain DSM 17167 / CIP 108236 / LMG 21445 / STM815) (Burkholderia phymatum).